A 225-amino-acid polypeptide reads, in one-letter code: Uracil-DNA glycosylase (225 aa).

Catalysis depends on Asp-65, which acts as the Proton acceptor.

Belongs to the uracil-DNA glycosylase (UDG) superfamily. UNG family.

The protein localises to the cytoplasm. It catalyses the reaction Hydrolyzes single-stranded DNA or mismatched double-stranded DNA and polynucleotides, releasing free uracil.. In terms of biological role, excises uracil residues from the DNA which can arise as a result of misincorporation of dUMP residues by DNA polymerase or due to deamination of cytosine. This is Uracil-DNA glycosylase from Bacillus cereus (strain AH187).